The primary structure comprises 421 residues: 3-isopropylmalate dehydratase large subunit (421 aa).

[4Fe-4S] cluster contacts are provided by Cys-300, Cys-360, and Cys-363.

The protein belongs to the aconitase/IPM isomerase family. LeuC type 2 subfamily. Heterodimer of LeuC and LeuD. It depends on [4Fe-4S] cluster as a cofactor.

The enzyme catalyses (2R,3S)-3-isopropylmalate = (2S)-2-isopropylmalate. The protein operates within amino-acid biosynthesis; L-leucine biosynthesis; L-leucine from 3-methyl-2-oxobutanoate: step 2/4. Functionally, catalyzes the isomerization between 2-isopropylmalate and 3-isopropylmalate, via the formation of 2-isopropylmaleate. In Moorella thermoacetica (strain ATCC 39073 / JCM 9320), this protein is 3-isopropylmalate dehydratase large subunit.